We begin with the raw amino-acid sequence, 133 residues long: Inhibitor of g-type lysozyme (133 aa).

The first 22 residues, Met1–Ala22, serve as a signal peptide directing secretion.

It is found in the periplasm. Its function is as follows. Inhibits activity of g-type lysozyme, which confers increased lysozyme tolerance to the bacterium. This Escherichia coli (strain K12) protein is Inhibitor of g-type lysozyme (pliG).